We begin with the raw amino-acid sequence, 375 residues long: 4,4'-diaponeurosporenoate glycosyltransferase (375 aa).

4 consecutive transmembrane segments (helical) span residues 7 to 23 (LLHA…YLMY), 112 to 132 (ACYL…DADV), 280 to 300 (IMML…GLAL), and 333 to 353 (FSIL…LVYI).

It belongs to the glycosyltransferase 2 family. CrtQ subfamily.

It is found in the cell membrane. Its pathway is carotenoid biosynthesis; staphyloxanthin biosynthesis; staphyloxanthin from farnesyl diphosphate: step 4/5. In terms of biological role, catalyzes the glycosylation of 4,4'-diaponeurosporenoate, i.e. the esterification of glucose at the C1'' position with the carboxyl group of 4,4'-diaponeurosporenic acid, to form glycosyl-4,4'-diaponeurosporenoate. This is a step in the biosynthesis of staphyloxanthin, an orange pigment present in most staphylococci strains. The chain is 4,4'-diaponeurosporenoate glycosyltransferase (crtQ) from Staphylococcus haemolyticus (strain JCSC1435).